Here is a 61-residue protein sequence, read N- to C-terminus: Odorranain-A6 (61 aa).

The signal sequence occupies residues 1-22 (MFSMKKSLLLLFFLGTISLSLC). Positions 23 to 45 (EQERDAEEEEGSENGAEDIKINR) are excised as a propeptide.

This sequence belongs to the frog skin active peptide (FSAP) family. Brevinin subfamily. As to expression, expressed by the skin glands.

It is found in the secreted. The polypeptide is Odorranain-A6 (Odorrana hainanensis (Odor frog)).